A 261-amino-acid chain; its full sequence is Cytochrome c oxidase subunit 3 (261 aa).

At 1-15 (MTHQTHAYHMVNPSP) the chain is on the mitochondrial matrix side. Residues 16-34 (WPLTGALSALLMTSGLAMW) traverse the membrane as a helical segment. Topologically, residues 35–40 (FHFNSP) are mitochondrial intermembrane. A helical membrane pass occupies residues 41–66 (SLLLIGLVTNTLTMYQWWRDIVREGT). The Mitochondrial matrix portion of the chain corresponds to 67 to 72 (FQGHHT). The chain crosses the membrane as a helical span at residues 73 to 105 (PIVQKGLRYGMILFIISEVFFFAGFFWAFYHSS). Over 106 to 128 (LAPTPELGGCWPPTGINPLNPLE) the chain is Mitochondrial intermembrane. Residues 129–152 (VPLLNTSVLLASGVSITWAHHSLM) traverse the membrane as a helical segment. Over 153–155 (EGN) the chain is Mitochondrial matrix. Residues 156–183 (RKNMQQALAITILLGIYFTLLQASEYYE) form a helical membrane-spanning segment. Topologically, residues 184–190 (TSFTISD) are mitochondrial intermembrane. A helical transmembrane segment spans residues 191–223 (GVYGSTFFMATGFHGLHVIIGSTFLTVCLLRQF). The Mitochondrial matrix segment spans residues 224 to 232 (NFHFTSNHH). A helical membrane pass occupies residues 233-256 (FGFEAAAWYWHFVDVVWLFLYVSI). Topologically, residues 257–261 (YWWGS) are mitochondrial intermembrane.

The protein belongs to the cytochrome c oxidase subunit 3 family. As to quaternary structure, component of the cytochrome c oxidase (complex IV, CIV), a multisubunit enzyme composed of 14 subunits. The complex is composed of a catalytic core of 3 subunits MT-CO1, MT-CO2 and MT-CO3, encoded in the mitochondrial DNA, and 11 supernumerary subunits COX4I, COX5A, COX5B, COX6A, COX6B, COX6C, COX7A, COX7B, COX7C, COX8 and NDUFA4, which are encoded in the nuclear genome. The complex exists as a monomer or a dimer and forms supercomplexes (SCs) in the inner mitochondrial membrane with NADH-ubiquinone oxidoreductase (complex I, CI) and ubiquinol-cytochrome c oxidoreductase (cytochrome b-c1 complex, complex III, CIII), resulting in different assemblies (supercomplex SCI(1)III(2)IV(1) and megacomplex MCI(2)III(2)IV(2)).

The protein localises to the mitochondrion inner membrane. The catalysed reaction is 4 Fe(II)-[cytochrome c] + O2 + 8 H(+)(in) = 4 Fe(III)-[cytochrome c] + 2 H2O + 4 H(+)(out). Functionally, component of the cytochrome c oxidase, the last enzyme in the mitochondrial electron transport chain which drives oxidative phosphorylation. The respiratory chain contains 3 multisubunit complexes succinate dehydrogenase (complex II, CII), ubiquinol-cytochrome c oxidoreductase (cytochrome b-c1 complex, complex III, CIII) and cytochrome c oxidase (complex IV, CIV), that cooperate to transfer electrons derived from NADH and succinate to molecular oxygen, creating an electrochemical gradient over the inner membrane that drives transmembrane transport and the ATP synthase. Cytochrome c oxidase is the component of the respiratory chain that catalyzes the reduction of oxygen to water. Electrons originating from reduced cytochrome c in the intermembrane space (IMS) are transferred via the dinuclear copper A center (CU(A)) of subunit 2 and heme A of subunit 1 to the active site in subunit 1, a binuclear center (BNC) formed by heme A3 and copper B (CU(B)). The BNC reduces molecular oxygen to 2 water molecules using 4 electrons from cytochrome c in the IMS and 4 protons from the mitochondrial matrix. This Oryctolagus cuniculus (Rabbit) protein is Cytochrome c oxidase subunit 3 (MT-CO3).